The following is a 235-amino-acid chain: Uracil-DNA glycosylase (235 aa).

Asp71 (proton acceptor) is an active-site residue.

Belongs to the uracil-DNA glycosylase (UDG) superfamily. UNG family.

It localises to the cytoplasm. The catalysed reaction is Hydrolyzes single-stranded DNA or mismatched double-stranded DNA and polynucleotides, releasing free uracil.. Functionally, excises uracil residues from the DNA which can arise as a result of misincorporation of dUMP residues by DNA polymerase or due to deamination of cytosine. This Campylobacter hominis (strain ATCC BAA-381 / DSM 21671 / CCUG 45161 / LMG 19568 / NCTC 13146 / CH001A) protein is Uracil-DNA glycosylase.